The primary structure comprises 492 residues: Trypanothione reductase (492 aa).

35–52 is a binding site for FAD; that stretch reads DVQTVHGPPFFAALGGTC. A disulfide bridge links Cys52 with Cys57. His461 acts as the Proton acceptor in catalysis.

The protein belongs to the class-I pyridine nucleotide-disulfide oxidoreductase family. In terms of assembly, homodimer. FAD serves as cofactor.

The protein resides in the cytoplasm. The catalysed reaction is trypanothione + NADP(+) = trypanothione disulfide + NADPH + H(+). In terms of biological role, trypanothione is the parasite analog of glutathione; this enzyme is the equivalent of glutathione reductase. The protein is Trypanothione reductase (TPR) of Trypanosoma congolense.